The chain runs to 119 residues: Large ribosomal subunit protein uL18 (119 aa).

Positions 1 to 23 are disordered; that stretch reads MSQVDKAARRQKIKDRSRVSVQG.

The protein belongs to the universal ribosomal protein uL18 family. In terms of assembly, part of the 50S ribosomal subunit; part of the 5S rRNA/L5/L18/L25 subcomplex. Contacts the 5S and 23S rRNAs.

In terms of biological role, this is one of the proteins that bind and probably mediate the attachment of the 5S RNA into the large ribosomal subunit, where it forms part of the central protuberance. The sequence is that of Large ribosomal subunit protein uL18 from Chlorobium chlorochromatii (strain CaD3).